Reading from the N-terminus, the 142-residue chain is ATP synthase epsilon chain (142 aa).

The protein belongs to the ATPase epsilon chain family. As to quaternary structure, F-type ATPases have 2 components, CF(1) - the catalytic core - and CF(0) - the membrane proton channel. CF(1) has five subunits: alpha(3), beta(3), gamma(1), delta(1), epsilon(1). CF(0) has three main subunits: a, b and c.

It is found in the cell inner membrane. Its function is as follows. Produces ATP from ADP in the presence of a proton gradient across the membrane. The protein is ATP synthase epsilon chain of Shewanella loihica (strain ATCC BAA-1088 / PV-4).